We begin with the raw amino-acid sequence, 465 residues long: Kinesin-like protein KIN-1 (465 aa).

One can recognise a Kinesin motor domain in the interval 3–334 (NVTVCARFRP…LRFGMRAKHI (332 aa)). ATP is bound at residue 87 to 94 (GQTGAGKT). The tract at residues 338–358 (PRASEVKSAKAQEEPSSVTKD) is disordered. Basic and acidic residues predominate over residues 341 to 358 (SEVKSAKAQEEPSSVTKD). A coiled-coil region spans residues 402-444 (VYEDIVSKTIQSLQQAVDELQQKVKKLEAENIGIQEQALRNHE).

Belongs to the TRAFAC class myosin-kinesin ATPase superfamily. Kinesin family. KIN-1 subfamily. As to quaternary structure, homodimer. Interacts with WIP1 and WIP2. Specifically expressed in ovules and anthers.

In terms of biological role, kinesin-like motor protein that promotes synapsis and is required for proper crossover distribution in meiosis. Plays a role in the nuclear division cycles during megagametogenesis. This chain is Kinesin-like protein KIN-1, found in Arabidopsis thaliana (Mouse-ear cress).